The primary structure comprises 145 residues: Acidic phospholipase A2 1 (145 aa).

Positions 1–21 (MYPAHLLVLLAVCVSLLGATA) are cleaved as a signal peptide. Residues 22–27 (IPPLPL) constitute a propeptide that is removed on maturation. 7 disulfides stabilise this stretch: Cys-38/Cys-98, Cys-54/Cys-144, Cys-56/Cys-72, Cys-71/Cys-125, Cys-78/Cys-118, Cys-87/Cys-111, and Cys-105/Cys-116. The Ca(2+) site is built by Tyr-55, Gly-57, and Gly-59. Residue His-75 is part of the active site. Ca(2+) is bound at residue Asp-76. Residue Asp-119 is part of the active site.

It belongs to the phospholipase A2 family. Group I subfamily. D49 sub-subfamily. Monomer. The cofactor is Ca(2+). As to expression, expressed by the venom gland.

The protein resides in the secreted. It catalyses the reaction a 1,2-diacyl-sn-glycero-3-phosphocholine + H2O = a 1-acyl-sn-glycero-3-phosphocholine + a fatty acid + H(+). Its function is as follows. PLA2 catalyzes the calcium-dependent hydrolysis of the 2-acyl groups in 3-sn-phosphoglycerides. This Laticauda semifasciata (Black-banded sea krait) protein is Acidic phospholipase A2 1.